The following is a 40-amino-acid chain: Large ribosomal subunit protein bL36B (40 aa).

The protein belongs to the bacterial ribosomal protein bL36 family.

The protein is Large ribosomal subunit protein bL36B of Streptomyces coelicolor (strain ATCC BAA-471 / A3(2) / M145).